A 224-amino-acid chain; its full sequence is tRNA (guanine-N(7)-)-methyltransferase (224 aa).

Residues Glu-52, Asp-77, and Asp-126 each coordinate S-adenosyl-L-methionine. Asp-126 is a catalytic residue. Substrate is bound by residues Lys-130 and Asp-162.

This sequence belongs to the class I-like SAM-binding methyltransferase superfamily. TrmB family.

It carries out the reaction guanosine(46) in tRNA + S-adenosyl-L-methionine = N(7)-methylguanosine(46) in tRNA + S-adenosyl-L-homocysteine. It participates in tRNA modification; N(7)-methylguanine-tRNA biosynthesis. Catalyzes the formation of N(7)-methylguanine at position 46 (m7G46) in tRNA. The sequence is that of tRNA (guanine-N(7)-)-methyltransferase from Christiangramia forsetii (strain DSM 17595 / CGMCC 1.15422 / KT0803) (Gramella forsetii).